A 1013-amino-acid polypeptide reads, in one-letter code: Poly [ADP-ribose] polymerase 1 (1013 aa).

Ala-2 bears the N-acetylalanine mark. The PARP-type 1 zinc finger occupies 9-93 (YRVEYAKSGR…KVKKTAEAGG (85 aa)). Positions 21 and 24 each coordinate Zn(2+). Phosphoserine is present on Ser-41. His-53 and Cys-56 together coordinate Zn(2+). N6-acetyllysine is present on residues Lys-97 and Lys-105. The PARP-type 2 zinc finger occupies 113-203 (FAAEYAKSNR…VLKKQLPGVK (91 aa)). Residues Cys-125 and Cys-128 each coordinate Zn(2+). Lys-131 is modified (N6-acetyllysine). 2 residues coordinate Zn(2+): His-159 and Cys-162. A phosphoserine mark is found at Ser-177, Ser-179, and Ser-185. Residue Lys-192 forms a Glycyl lysine isopeptide (Lys-Gly) (interchain with G-Cter in SUMO2) linkage. The tract at residues 198–233 (QLPGVKSEGKRKGDEVDGADEVAKKKSKKGKDKDSK) is disordered. Lys-203 participates in a covalent cross-link: Glycyl lysine isopeptide (Lys-Gly) (interchain with G-Cter in SUMO1); alternate. Residue Lys-203 forms a Glycyl lysine isopeptide (Lys-Gly) (interchain with G-Cter in SUMO2); alternate linkage. Short sequence motifs (nuclear localization signal) lie at residues 207-209 (KRK) and 221-226 (KKKSKK). A PADR1 zinc-binding domain is found at 225–359 (KKGKDKDSKL…VKKQDRIFPP (135 aa)). A Glycyl lysine isopeptide (Lys-Gly) (interchain with G-Cter in SUMO2) cross-link involves residue Lys-249. Ser-274 and Ser-277 each carry phosphoserine. Residues 290 to 332 (GALLPCKECSGQLVFKSDAYYCTGDVTAWTKCMVKTQTPSRKE) are zinc ribbon. Residues Cys-295, Cys-298, Cys-311, and Cys-321 each contribute to the Zn(2+) site. A disordered region spans residues 357 to 383 (FPPETSAPAPPHLPPSVTSAPTAVNSS). The segment covering 372-383 (SVTSAPTAVNSS) has biased composition (polar residues). An automodification domain region spans residues 373 to 523 (VTSAPTAVNS…GVNKSEKRMK (151 aa)). In terms of domain architecture, BRCT spans 385-476 (PADKPLSNMK…KSLQELLSAH (92 aa)). The residue at position 387 (Asp-387) is a PolyADP-ribosyl aspartic acid. Residues Glu-407, Glu-413, Glu-435, Glu-437, Glu-444, Glu-445, and Glu-456 each carry the polyADP-ribosyl glutamic acid modification. Residue Lys-467 forms a Glycyl lysine isopeptide (Lys-Gly) (interchain with G-Cter in SUMO2) linkage. PolyADP-ribosyl glutamic acid occurs at positions 471 and 484. A Glycyl lysine isopeptide (Lys-Gly) (interchain with G-Cter in SUMO1); alternate cross-link involves residue Lys-486. A Glycyl lysine isopeptide (Lys-Gly) (interchain with G-Cter in SUMO2); alternate cross-link involves residue Lys-486. A polyADP-ribosyl glutamic acid mark is found at Glu-488 and Glu-491. The disordered stretch occupies residues 495–516 (PKGKSAAPSKKSKGLYKEEGVN). Residues Ser-499, Ser-503, and Ser-506 each carry the ADP-ribosylserine modification. Lys-511 is covalently cross-linked (Glycyl lysine isopeptide (Lys-Gly) (interchain with G-Cter in SUMO2)). PolyADP-ribosyl glutamic acid is present on residues Glu-512 and Glu-513. Ser-518 is subject to ADP-ribosylserine. Residue Glu-519 is modified to PolyADP-ribosyl glutamic acid. An N6-(ADP-ribosyl)lysine modification is found at Lys-520. Lys-527 participates in a covalent cross-link: Glycyl lysine isopeptide (Lys-Gly) (interchain with G-Cter in SUMO2). The WGR domain occupies 541-637 (SAHVLEKGGK…KNFTKYPKKF (97 aa)). Thr-593 is subject to Phosphothreonine. N6-acetyllysine occurs at positions 599 and 620. The PARP alpha-helical domain occupies 661-778 (KSKLPKAVQE…DIEVAYSLLR (118 aa)). Lys-747 is covalently cross-linked (Glycyl lysine isopeptide (Lys-Gly) (interchain with G-Cter in SUMO1); alternate). Lys-747 is covalently cross-linked (Glycyl lysine isopeptide (Lys-Gly) (interchain with G-Cter in SUMO2); alternate). Phosphoserine is present on residues Ser-781 and Ser-785. One can recognise a PARP catalytic domain in the interval 787–1013 (DPIDVNYEKL…LKFNFKTSLW (227 aa)). Residues 861–863 (HGS), Gly-870, Arg-877, and Ser-903 contribute to the NAD(+) site. Glu-987 (for poly [ADP-ribose] polymerase activity) is an active-site residue.

This sequence belongs to the ARTD/PARP family. Homodimer; PARP-type zinc-fingers from separate PARP1 molecules form a dimer module that specifically recognizes DNA strand breaks. Heterodimer; heterodimerizes with PARP2. Interacts (via the PARP catalytic domain) with HPF1. Interacts with NMNAT1. Interacts with nucleosomes; with a preference for nucleosomes containing H2A.X. Interacts with APTX. Component of a base excision repair (BER) complex, containing at least XRCC1, PARP1, PARP2, POLB and LRIG3. Interacts with SRY. The SWAP complex consists of NPM1, NCL, PARP1 and SWAP70. Interacts with TIAM2. Interacts with PARP3; leading to activate PARP1 in absence of DNA. Interacts (when poly-ADP-ribosylated) with CHD1L (via macro domain). Interacts with the DNA polymerase alpha catalytic subunit POLA1; this interaction functions as part of the control of replication fork progression. Interacts with EEF1A1 and TXK. Interacts with RNF4. Interacts with RNF146. Interacts with ZNF423. Interacts with APLF. Interacts with SNAI1 (via zinc fingers); the interaction requires SNAI1 to be poly-ADP-ribosylated and non-phosphorylated (active) by GSK3B. Interacts (when poly-ADP-ribosylated) with PARP9. Interacts with NR4A3; activates PARP1 by improving acetylation of PARP1 and suppressing the interaction between PARP1 and SIRT1. Interacts (via catalytic domain) with PUM3; the interaction inhibits the poly-ADP-ribosylation activity of PARP1 and the degradation of PARP1 by CASP3 following genotoxic stress. Interacts with ZNF365. Interacts with RRP1B. Interacts with TIMELESS; the interaction is direct. Interacts with CGAS; leading to impede the formation of the PARP1-TIMELESS complex. Interacts with KHDC3L, the interaction is increased following the formation of DNA double-strand breaks. Interacts (when auto-poly-ADP-ribosylated) with XRCC1; leading to inhibit PARP1 ADP-ribosyltransferase activity. Interacts with SPINDOC; promoting PARP1 ADP-ribosyltransferase activity. Interacts with BANF1; leading to inhibit PARP1 ADP-ribosyltransferase activity in response to oxidative DNA damage. Interacts (when sumoylated and ubiquitinated) with VCP/p97; leading to its extraction from chromatin. Interacts with YARS1; promoting PARP1 ADP-ribosyltransferase activity. Interacts with PACMP micropeptide; Interacts with PACMP micropeptide; interaction. Interacts (when poly-ADP-ribosylated) with isoform 1 of MACROH2A1; MACROH2A1 specifically binds to poly-ADP-ribose chains and inhibits PARP1 activity, limiting the consumption of nuclear NAD(+). Interacts with CARM1; promoting recruitment to replication forks. Interacts with RECQL. Interacts with ZNF32; the interaction reshapes ZNF432 interacting proteins. Interacts with TPRN; TPRN interacts with a number of DNA damage response proteins, is recruited to sites of DNA damage and may play a role in DNA damage repair. In terms of assembly, interacts (when auto-poly-ADP-ribosylated) with AIFM1. In terms of processing, poly-ADP-ribosylated on serine, glutamate and aspartate residues by autocatalysis. Auto-ADP-ribosylation on serine takes place following interaction with HPF1. Auto poly-ADP-ribosylation on serine residues promotes its dissociation from chromatin. Poly-ADP-ribosylated by PARP2; poly-ADP-ribosylation mediates the recruitment of CHD1L to DNA damage sites. Mono-ADP-ribosylated at Lys-520 by SIRT6 in response to oxidative stress, promoting recruitment to double-strand breaks (DSBs) sites. Post-translationally, S-nitrosylated, leading to inhibit transcription regulation activity. Phosphorylated at Thr-593 by PRKDC in response to DNA damage following virus infection, promoting its translocation to the cytosol. Phosphorylated by TXK. In terms of processing, proteolytically cleaved by caspase-3 (CASP3) and caspase-7 (CASP7) in response to apoptosis to generate the Poly [ADP-ribose] polymerase 1, processed N-terminus and Poly [ADP-ribose] polymerase 1, processed C-terminus forms. Post-translationally, sumoylated with SUMO1 or SUMO2 by PIAS4 following prolonged residence (trapping) to chromatin. Sumoylation promotes ubiquitination by RNF4 and removal from chromatin by VCP/p97. Ubiquitinated by RNF4 following sumoylation by PIAS4 in response to prolonged residence (trapping) to chromatin. Ubiquitination promotes removal from chromatin by VCP/p97.

The protein resides in the chromosome. The protein localises to the nucleus. It localises to the nucleolus. It is found in the cytoplasm. Its subcellular location is the cytosol. The catalysed reaction is NAD(+) + (ADP-D-ribosyl)n-acceptor = nicotinamide + (ADP-D-ribosyl)n+1-acceptor + H(+).. It carries out the reaction L-seryl-[protein] + NAD(+) = O-(ADP-D-ribosyl)-L-seryl-[protein] + nicotinamide + H(+). The enzyme catalyses L-aspartyl-[protein] + NAD(+) = 4-O-(ADP-D-ribosyl)-L-aspartyl-[protein] + nicotinamide. It catalyses the reaction L-glutamyl-[protein] + NAD(+) = 5-O-(ADP-D-ribosyl)-L-glutamyl-[protein] + nicotinamide. The catalysed reaction is L-tyrosyl-[protein] + NAD(+) = O-(ADP-D-ribosyl)-L-tyrosyl-[protein] + nicotinamide + H(+). It carries out the reaction L-histidyl-[protein] + NAD(+) = N(tele)-(ADP-D-ribosyl)-L-histidyl-[protein] + nicotinamide + H(+). With respect to regulation, ADP-ribosyltransferase activity is regulated via an allosteric activation mechanism. In absence of activation signal, PARP1 is autoinhibited by the PARP alpha-helical domain (also named HD region), which prevents effective NAD(+)-binding. Activity is highly stimulated by signals, such as DNA strand breaks. Binding to damaged DNA unfolds the PARP alpha-helical domain, relieving autoinhibition. Poly-ADP-ribosyltransferase activity is tightly regulated and PARP1 is removed from damaged chromatin following initial poly-ADP-ribosylation of chromatin to avoid prolonged residence (trapping) that has cytotoxic consequences. A number of factors (VCP/p97) or post-translational modifications (auto-poly-ADP-ribosylation or ubiquitination) promote PARP1 removal from chromatin. Functionally, poly-ADP-ribosyltransferase that mediates poly-ADP-ribosylation of proteins and plays a key role in DNA repair. Mediates glutamate, aspartate, serine, histidine or tyrosine ADP-ribosylation of proteins: the ADP-D-ribosyl group of NAD(+) is transferred to the acceptor carboxyl group of target residues and further ADP-ribosyl groups are transferred to the 2'-position of the terminal adenosine moiety, building up a polymer with an average chain length of 20-30 units. Serine ADP-ribosylation of proteins constitutes the primary form of ADP-ribosylation of proteins in response to DNA damage. Specificity for the different amino acids is conferred by interacting factors, such as HPF1 and NMNAT1. Following interaction with HPF1, catalyzes serine ADP-ribosylation of target proteins; HPF1 confers serine specificity by completing the PARP1 active site. Also catalyzes tyrosine ADP-ribosylation of target proteins following interaction with HPF1. Following interaction with NMNAT1, catalyzes glutamate and aspartate ADP-ribosylation of target proteins; NMNAT1 confers glutamate and aspartate specificity. PARP1 initiates the repair of DNA breaks: recognizes and binds DNA breaks within chromatin and recruits HPF1, licensing serine ADP-ribosylation of target proteins, such as histones (H2BS6ADPr and H3S10ADPr), thereby promoting decompaction of chromatin and the recruitment of repair factors leading to the reparation of DNA strand breaks. HPF1 initiates serine ADP-ribosylation but restricts the polymerase activity of PARP1 in order to limit the length of poly-ADP-ribose chains. In addition to base excision repair (BER) pathway, also involved in double-strand breaks (DSBs) repair: together with TIMELESS, accumulates at DNA damage sites and promotes homologous recombination repair by mediating poly-ADP-ribosylation. Mediates the poly-ADP-ribosylation of a number of proteins, including itself, APLF, CHFR and NFAT5. In addition to proteins, also able to ADP-ribosylate DNA: catalyzes ADP-ribosylation of DNA strand break termini containing terminal phosphates and a 2'-OH group in single- and double-stranded DNA, respectively. Required for PARP9 and DTX3L recruitment to DNA damage sites. PARP1-dependent PARP9-DTX3L-mediated ubiquitination promotes the rapid and specific recruitment of 53BP1/TP53BP1, UIMC1/RAP80, and BRCA1 to DNA damage sites. PARP1-mediated DNA repair in neurons plays a role in sleep: senses DNA damage in neurons and promotes sleep, facilitating efficient DNA repair. In addition to DNA repair, also involved in other processes, such as transcription regulation, programmed cell death, membrane repair, adipogenesis and innate immunity. Acts as a repressor of transcription: binds to nucleosomes and modulates chromatin structure in a manner similar to histone H1, thereby altering RNA polymerase II. Acts both as a positive and negative regulator of transcription elongation, depending on the context. Acts as a positive regulator of transcription elongation by mediating poly-ADP-ribosylation of NELFE, preventing RNA-binding activity of NELFE and relieving transcription pausing. Acts as a negative regulator of transcription elongation in response to DNA damage by catalyzing poly-ADP-ribosylation of CCNT1, disrupting the phase separation activity of CCNT1 and subsequent activation of CDK9. Involved in replication fork progression following interaction with CARM1: mediates poly-ADP-ribosylation at replication forks, slowing fork progression. Poly-ADP-ribose chains generated by PARP1 also play a role in poly-ADP-ribose-dependent cell death, a process named parthanatos. Also acts as a negative regulator of the cGAS-STING pathway. Acts by mediating poly-ADP-ribosylation of CGAS: PARP1 translocates into the cytosol following phosphorylation by PRKDC and catalyzes poly-ADP-ribosylation and inactivation of CGAS. Acts as a negative regulator of adipogenesis: catalyzes poly-ADP-ribosylation of histone H2B on 'Glu-35' (H2BE35ADPr) following interaction with NMNAT1, inhibiting phosphorylation of H2B at 'Ser-36' (H2BS36ph), thereby blocking expression of pro-adipogenetic genes. Involved in the synthesis of ATP in the nucleus, together with NMNAT1, PARG and NUDT5. Nuclear ATP generation is required for extensive chromatin remodeling events that are energy-consuming. In terms of biological role, promotes AIFM1-mediated apoptosis. This form, which translocates into the cytoplasm following cleavage by caspase-3 (CASP3) and caspase-7 (CASP7) in response to apoptosis, is auto-poly-ADP-ribosylated and serves as a poly-ADP-ribose carrier to induce AIFM1-mediated apoptosis. Its function is as follows. This cleavage form irreversibly binds to DNA breaks and interferes with DNA repair, promoting DNA damage-induced apoptosis. The protein is Poly [ADP-ribose] polymerase 1 (PARP1) of Cricetulus griseus (Chinese hamster).